A 590-amino-acid polypeptide reads, in one-letter code: uncharacterized protein (590 aa).

The tract at residues 330-368 is disordered; it reads IDKSESDIDDSESDIDSENDIDSESDIDDSETDDEEELE. The segment covering 336 to 368 has biased composition (acidic residues); it reads DIDDSESDIDSENDIDSESDIDDSETDDEEELE.

The protein belongs to the mimivirus L5 family.

This is an uncharacterized protein from Acanthamoeba polyphaga mimivirus (APMV).